We begin with the raw amino-acid sequence, 131 residues long: Peptide methionine sulfoxide reductase MsrB (131 aa).

Residues 9-131 (DEDWKKELTP…NSASLKFQKE (123 aa)) form the MsrB domain. Residues Cys48, Cys51, Cys97, and Cys100 each coordinate Zn(2+). The Nucleophile role is filled by Cys120.

It belongs to the MsrB Met sulfoxide reductase family. Requires Zn(2+) as cofactor.

The catalysed reaction is L-methionyl-[protein] + [thioredoxin]-disulfide + H2O = L-methionyl-(R)-S-oxide-[protein] + [thioredoxin]-dithiol. This Leptospira interrogans serogroup Icterohaemorrhagiae serovar Lai (strain 56601) protein is Peptide methionine sulfoxide reductase MsrB.